The chain runs to 226 residues: Transmembrane 4 L6 family member 20 (226 aa).

Residues 1–14 (MTCCEGWTSCNGFS) are Lumenal-facing. A helical membrane pass occupies residues 15 to 35 (LLILILLGVVINCIPLGISLV). At 36 to 49 (EADSTSQNPISCYE) the chain is on the cytoplasmic side. The helical transmembrane segment at 50 to 70 (WWFPGIIGAGLMAIPATTMSL) threads the bilayer. Residues 71-83 (AARKRACCNNKTG) lie on the Lumenal side of the membrane. Residues 84–104 (MFLSSLFSVITVVGAVYCMLV) form a helical membrane-spanning segment. Residues 105 to 191 (SLQALLEGPL…RIFHFSVFMS (87 aa)) lie on the Cytoplasmic side of the membrane. The chain crosses the membrane as a helical span at residues 192–212 (LLLVGILELLFGLSQILIGFL). At 213–226 (GCLCGVSQRRSQIV) the chain is on the lumenal side.

This sequence belongs to the L6 tetraspanin family. Glycosylated at Asn-132, Asn-148 and Asn-163 in presence of ceramide which inverts the orientation of TM4SF20 in membranes exposing these residues to the endoplasmic reticulum lumen. In terms of processing, cleaved by signal peptidase at Ser-14 but the peptide does not act as a signal peptide. Cleavage is inhibited by ceramide which inverts the orientation of TM4SF20 in membranes exposing the N-terminus to the cytosol and not to the endoplasmic reticulum lumen.

The protein localises to the membrane. The protein resides in the endoplasmic reticulum membrane. In terms of biological role, polytopic transmembrane protein. Inhibits regulated intramembrane proteolysis (RIP) of CREB3L1, inhibiting its activation and the induction of collagen synthesis. In response to ceramide, which alters TM4SF20 membrane topology, stimulates RIP activation of CREB3L1. Ceramide reverses the direction through which transmembrane helices are translocated into the endoplasmic reticulum membrane during translation of TM4SF20, this mechanism is called 'regulated alternative translocation' (RAT) and regulates the function of the transmembrane protein. This Mus musculus (Mouse) protein is Transmembrane 4 L6 family member 20 (Tm4sf20).